We begin with the raw amino-acid sequence, 148 residues long: MRKSKEKGRSGSTRPPQLKKPEWVKMRPEEVEELVVSLYRKGYPPSMIGVILRDQYGIPMVKAVTGKSVLQILRERGLAPEIPEDLMNLMKRAIRVRKHLEEHPKDYHSKRGLQLIESKIHRLVKYYKREGILPPDWKYEPSKIALYT.

The segment at methionine 1–tryptophan 23 is disordered.

It belongs to the universal ribosomal protein uS15 family. In terms of assembly, part of the 30S ribosomal subunit.

This is Small ribosomal subunit protein uS15 from Thermofilum pendens (strain DSM 2475 / Hrk 5).